The chain runs to 87 residues: Large ribosomal subunit protein bL31B (87 aa).

Belongs to the bacterial ribosomal protein bL31 family. Type B subfamily. In terms of assembly, part of the 50S ribosomal subunit.

This is Large ribosomal subunit protein bL31B from Burkholderia vietnamiensis (strain G4 / LMG 22486) (Burkholderia cepacia (strain R1808)).